The following is a 228-amino-acid chain: Acyl-protein thioesterase 1 (228 aa).

Residues serine 119, aspartate 174, and histidine 208 each act as charge relay system in the active site.

The protein belongs to the AB hydrolase superfamily. AB hydrolase 2 family.

The protein localises to the cytoplasm. Its subcellular location is the nucleus. It catalyses the reaction S-hexadecanoyl-L-cysteinyl-[protein] + H2O = L-cysteinyl-[protein] + hexadecanoate + H(+). In terms of biological role, hydrolyzes fatty acids from S-acylated cysteine residues in proteins with a strong preference for palmitoylated G-alpha proteins over other acyl substrates. Mediates the deacylation of G-alpha proteins such as GPA1 in vivo, but has weak or no activity toward palmitoylated Ras proteins. Has weak lysophospholipase activity in vitro; however such activity may not exist in vivo. This Kluyveromyces lactis (strain ATCC 8585 / CBS 2359 / DSM 70799 / NBRC 1267 / NRRL Y-1140 / WM37) (Yeast) protein is Acyl-protein thioesterase 1.